The primary structure comprises 230 residues: Probable septum site-determining protein MinC (230 aa).

It belongs to the MinC family. As to quaternary structure, interacts with MinD and FtsZ.

Cell division inhibitor that blocks the formation of polar Z ring septums. Rapidly oscillates between the poles of the cell to destabilize FtsZ filaments that have formed before they mature into polar Z rings. Prevents FtsZ polymerization. The chain is Probable septum site-determining protein MinC from Cronobacter sakazakii (strain ATCC BAA-894) (Enterobacter sakazakii).